The sequence spans 135 residues: Small ribosomal subunit protein uS8 (135 aa).

It belongs to the universal ribosomal protein uS8 family. As to quaternary structure, part of the 30S ribosomal subunit. Contacts proteins S5 and S12.

Its function is as follows. One of the primary rRNA binding proteins, it binds directly to 16S rRNA central domain where it helps coordinate assembly of the platform of the 30S subunit. The chain is Small ribosomal subunit protein uS8 from Cutibacterium acnes (strain DSM 16379 / KPA171202) (Propionibacterium acnes).